The chain runs to 448 residues: Asparagine--tRNA ligase (448 aa).

Belongs to the class-II aminoacyl-tRNA synthetase family. Homodimer.

The protein localises to the cytoplasm. The catalysed reaction is tRNA(Asn) + L-asparagine + ATP = L-asparaginyl-tRNA(Asn) + AMP + diphosphate + H(+). This Streptococcus mutans serotype c (strain ATCC 700610 / UA159) protein is Asparagine--tRNA ligase.